A 392-amino-acid chain; its full sequence is MALRCFPIWVCPQTTHHRSPLMGLAEFDADKRRRFCLWECSSSASQRAVTAIEGEIPFSRELKKSSDELGLTQETQSLSFHRDLSMLPKPLTANSLYSSDGDDSKVRISFQGIPGAYSETAALKAFPNCETVPCEQFEAAFQAVELWLVDKAVLPIENSVGGSIHRNYDLLLRHRLHIVQEVHLPVNHCLLGVPGVKKEDIKCVLSHPQALDQCVNSLNNLGIQRISAKDTATAAQTVSSSGKIDVGAIASVRAANIYGLDILAENIQDDVNNVTRFLILAREPMIPRTDRPYKTSIVFSLEEGPGVLFKALAVFALRSINLSKIESRPQRRRPLRVVDGSNNGSAKYFDYLFYIDFEASMADTRAQHALGHLQEFASFIRILGCYPMDLVR.

Residues 1–48 constitute a chloroplast transit peptide; that stretch reads MALRCFPIWVCPQTTHHRSPLMGLAEFDADKRRRFCLWECSSSASQRA. Residues 107–282 form the Prephenate dehydratase domain; that stretch reads RISFQGIPGA…NVTRFLILAR (176 aa). In terms of domain architecture, ACT spans 296-387; sequence SIVFSLEEGP…SFIRILGCYP (92 aa).

Expressed in roots, leaves, stems, flowers and siliques.

It localises to the plastid. Its subcellular location is the chloroplast stroma. The catalysed reaction is L-arogenate + H(+) = L-phenylalanine + CO2 + H2O. It carries out the reaction prephenate + H(+) = 3-phenylpyruvate + CO2 + H2O. It participates in amino-acid biosynthesis; L-phenylalanine biosynthesis; L-phenylalanine from L-arogenate: step 1/1. It functions in the pathway amino-acid biosynthesis; L-phenylalanine biosynthesis; phenylpyruvate from prephenate: step 1/1. Its function is as follows. Converts the prephenate produced from the shikimate-chorismate pathway into phenylalanine. Dehydratase that uses arogenate and prephenate as substrates. Utilzes more efficiently arogenate than prephenate. The protein is Arogenate dehydratase/prephenate dehydratase 1, chloroplastic of Arabidopsis thaliana (Mouse-ear cress).